The chain runs to 741 residues: Ribosome-releasing factor 2, mitochondrial (741 aa).

The transit peptide at 1–29 (MLKYEFLHGLQKRSHYLRQLSGQFFSRSY) directs the protein to the mitochondrion. The region spanning 31-310 (SKIRNIGILA…AVNSYLPAPE (280 aa)) is the tr-type G domain. GTP-binding positions include 40-47 (AHIDAGKT), 104-108 (DTPGH), and 158-161 (NKMD).

It belongs to the TRAFAC class translation factor GTPase superfamily. Classic translation factor GTPase family. EF-G/EF-2 subfamily.

It is found in the mitochondrion. In terms of biological role, mitochondrial GTPase that mediates the disassembly of ribosomes from messenger RNA at the termination of mitochondrial protein biosynthesis. Not involved in the GTP-dependent ribosomal translocation step during translation elongation. This is Ribosome-releasing factor 2, mitochondrial from Drosophila ananassae (Fruit fly).